The chain runs to 489 residues: Rhamnulokinase (489 aa).

A13–R17 contributes to the ATP binding site. C68 and C222 are oxidised to a cystine. Residues G83 and H236–T238 each bind substrate. Catalysis depends on D237, which acts as the Proton acceptor. T259 lines the ATP pocket. Residue N296 participates in substrate binding. ATP is bound at residue Q304. C353 and C370 are disulfide-bonded. G402 provides a ligand contact to ATP. C413 and C417 are disulfide-bonded.

This sequence belongs to the rhamnulokinase family. It depends on Mg(2+) as a cofactor.

It carries out the reaction L-rhamnulose + ATP = L-rhamnulose 1-phosphate + ADP + H(+). It participates in carbohydrate degradation; L-rhamnose degradation; glycerone phosphate from L-rhamnose: step 2/3. Functionally, involved in the catabolism of L-rhamnose (6-deoxy-L-mannose). Catalyzes the transfer of the gamma-phosphate group from ATP to the 1-hydroxyl group of L-rhamnulose to yield L-rhamnulose 1-phosphate. The chain is Rhamnulokinase from Salmonella agona (strain SL483).